Here is a 449-residue protein sequence, read N- to C-terminus: Glucose-6-phosphate isomerase (449 aa).

The active-site Proton donor is the Glu-290. Catalysis depends on residues His-311 and Lys-425.

This sequence belongs to the GPI family.

It is found in the cytoplasm. It carries out the reaction alpha-D-glucose 6-phosphate = beta-D-fructose 6-phosphate. The protein operates within carbohydrate biosynthesis; gluconeogenesis. Its pathway is carbohydrate degradation; glycolysis; D-glyceraldehyde 3-phosphate and glycerone phosphate from D-glucose: step 2/4. Catalyzes the reversible isomerization of glucose-6-phosphate to fructose-6-phosphate. This is Glucose-6-phosphate isomerase from Clostridium tetani (strain Massachusetts / E88).